The primary structure comprises 183 residues: uncharacterized protein (183 aa).

This is an uncharacterized protein from Saccharomyces cerevisiae (strain ATCC 204508 / S288c) (Baker's yeast).